The chain runs to 173 residues: NADH-ubiquinone oxidoreductase chain 6 (173 aa).

The next 6 membrane-spanning stretches (helical) occupy residues 1-21, 27-47, 48-68, 87-107, 113-133, and 139-159; these read MTYF…AVAS, YGVV…LSLG, VSFV…VVFV, VVGY…VGGF, FGVI…FGGV, and CGVG…FVVL.

Belongs to the complex I subunit 6 family.

Its subcellular location is the mitochondrion membrane. The enzyme catalyses a ubiquinone + NADH + 5 H(+)(in) = a ubiquinol + NAD(+) + 4 H(+)(out). Functionally, core subunit of the mitochondrial membrane respiratory chain NADH dehydrogenase (Complex I) that is believed to belong to the minimal assembly required for catalysis. Complex I functions in the transfer of electrons from NADH to the respiratory chain. The immediate electron acceptor for the enzyme is believed to be ubiquinone. This chain is NADH-ubiquinone oxidoreductase chain 6 (MT-ND6), found in Alle alle (Dovekie).